A 597-amino-acid chain; its full sequence is Probable bifunctional ADP-ribose hydrolase/ADP-ribosyltransferase (597 aa).

The 201-residue stretch at 99–299 folds into the Macro domain; the sequence is SRLIKHGDLG…FYSKLLGPSH (201 aa). The ADP-D-ribose site is built by D118, I119, and N133. Positions 139, 144, and 146 each coordinate Zn(2+). ADP-D-ribose contacts are provided by C146, I147, D148, S244, T245, G246, and F248. Residues 307 to 597 enclose the Deacetylase sirtuin-type domain; sequence ENTPQGSLSL…IGRAIPLLLE (291 aa). NAD(+) is bound by residues A333, 418–421, and Q438; that span reads SNAD. 4 residues coordinate Zn(2+): C446, C450, C485, and C488. V584 contacts NAD(+).

This sequence in the N-terminal section; belongs to the MacroD-type family. Zn-Macro subfamily. The protein in the C-terminal section; belongs to the sirtuin family. Class M subfamily. As to quaternary structure, monomer. It depends on Zn(2+) as a cofactor.

The catalysed reaction is 5-O-(ADP-D-ribosyl)-L-glutamyl-[protein] + H2O = L-glutamyl-[protein] + ADP-D-ribose + H(+). In terms of biological role, is probably a bifunctional enzyme with ADP-ribosyltransferase and ADP-ribosylhydrolase activities. In vitro, can act as an ADP-ribosylhydrolase that hydrolyzes ADP-ribosyl-glutamate bonds. It can remove the ADP-ribosyl modification from the human mono-ADP-ribosylated PARP1 E988Q mutant, which is primarily modified on glutamate site with only minor aspartate contribution. It cannot hydrolyze the ADP-ribosyl-arpartate bond in ribosylated S.pyogenes GcvH-L. The sequence is that of Probable bifunctional ADP-ribose hydrolase/ADP-ribosyltransferase from Fusarium oxysporum f. sp. cubense.